The chain runs to 411 residues: Dihydrofolate synthase/folylpolyglutamate synthase (411 aa).

53–56 (GKGT) contributes to the ATP binding site. Ser77 is a binding site for Mg(2+). 7,8-dihydropteroate is bound by residues 116–119 (TYFE) and 147–149 (LDA). His167 serves as a coordination point for Mg(2+). Residues Arg283 and Asp296 each contribute to the ATP site.

This sequence belongs to the folylpolyglutamate synthase family. In terms of assembly, monomer. Mg(2+) is required as a cofactor.

It carries out the reaction 7,8-dihydropteroate + L-glutamate + ATP = 7,8-dihydrofolate + ADP + phosphate + H(+). It catalyses the reaction (6S)-5,6,7,8-tetrahydrofolyl-(gamma-L-Glu)(n) + L-glutamate + ATP = (6S)-5,6,7,8-tetrahydrofolyl-(gamma-L-Glu)(n+1) + ADP + phosphate + H(+). The enzyme catalyses 10-formyltetrahydrofolyl-(gamma-L-Glu)(n) + L-glutamate + ATP = 10-formyltetrahydrofolyl-(gamma-L-Glu)(n+1) + ADP + phosphate + H(+). The catalysed reaction is (6R)-5,10-methylenetetrahydrofolyl-(gamma-L-Glu)(n) + L-glutamate + ATP = (6R)-5,10-methylenetetrahydrofolyl-(gamma-L-Glu)(n+1) + ADP + phosphate + H(+). The protein operates within cofactor biosynthesis; tetrahydrofolate biosynthesis; 7,8-dihydrofolate from 2-amino-4-hydroxy-6-hydroxymethyl-7,8-dihydropteridine diphosphate and 4-aminobenzoate: step 2/2. It participates in cofactor biosynthesis; tetrahydrofolylpolyglutamate biosynthesis. Its function is as follows. Functions in two distinct reactions of the de novo folate biosynthetic pathway. Catalyzes the addition of a glutamate residue to dihydropteroate (7,8-dihydropteroate or H2Pte) to form dihydrofolate (7,8-dihydrofolate monoglutamate or H2Pte-Glu). Also catalyzes successive additions of L-glutamate to tetrahydrofolate or 10-formyltetrahydrofolate or 5,10-methylenetetrahydrofolate, leading to folylpolyglutamate derivatives. The sequence is that of Dihydrofolate synthase/folylpolyglutamate synthase (folC) from Buchnera aphidicola subsp. Acyrthosiphon pisum (strain APS) (Acyrthosiphon pisum symbiotic bacterium).